The sequence spans 447 residues: MREIVHLQTGQCGNQIGAAFWQTISGEHGLDGSGVYNGTSDLQLERLNVYFNEASGNKYVPRAVLVDLEPGTMDAVRAGPFGQLFRPDNFVFGQSGAGNNWAKGHYTEGAELVDQVLDVVRREAEGCDCLQGFQITHSLGGGTGAGMGTLLISKIREEFPDRMMATFSVVPSPKVSDTVVEPYNATLSIHQLVENSDETFCIDNEALYDICMRTLKLTNPSYGDLNHLVSAVMSGVTTCLRFPGQLNSDLRKLAVNMVPFPRLHFFMVGFAPLTSRGAHSFRAVTVPELTQQMFDPKNMMAASDFRNGRYLTCSAIFRGKVSMKEVEDQMRNVQNKNSSYFVEWIPTNVQTALCSIPPRGLKMSSTFVGNSTSIQELFKRIGDQFTRMFRRKAFLHWYTGEGMDEMEFTEAESNMNDLVSEYQQYQDASISEGEEEYEEEAPMEPEE.

8 residues coordinate GTP: Gln-11, Glu-69, Ser-138, Gly-142, Thr-143, Gly-144, Asn-204, and Asn-226. Residue Glu-69 coordinates Mg(2+). Positions 421–447 (EYQQYQDASISEGEEEYEEEAPMEPEE) are disordered. Over residues 432–447 (EGEEEYEEEAPMEPEE) the composition is skewed to acidic residues.

It belongs to the tubulin family. Dimer of alpha and beta chains. A typical microtubule is a hollow water-filled tube with an outer diameter of 25 nm and an inner diameter of 15 nM. Alpha-beta heterodimers associate head-to-tail to form protofilaments running lengthwise along the microtubule wall with the beta-tubulin subunit facing the microtubule plus end conferring a structural polarity. Microtubules usually have 13 protofilaments but different protofilament numbers can be found in some organisms and specialized cells. Mg(2+) serves as cofactor.

The protein resides in the cytoplasm. Its subcellular location is the cytoskeleton. In terms of biological role, tubulin is the major constituent of microtubules, a cylinder consisting of laterally associated linear protofilaments composed of alpha- and beta-tubulin heterodimers. Microtubules grow by the addition of GTP-tubulin dimers to the microtubule end, where a stabilizing cap forms. Below the cap, tubulin dimers are in GDP-bound state, owing to GTPase activity of alpha-tubulin. The sequence is that of Tubulin beta chain from Rhynchosporium secalis (Barley scald fungus).